Here is a 473-residue protein sequence, read N- to C-terminus: Levansucrase (473 aa).

An N-terminal signal peptide occupies residues 1 to 29 (MNIKKFAKQATVLTFTTALLAGGATQAFA). Positions 85, 86, and 164 each coordinate sucrose. The active-site Nucleophile is the D86. D241 is a Ca(2+) binding site. 2 residues coordinate sucrose: R246 and D247. Residues Q272, L308, N310, and D339 each contribute to the Ca(2+) site. Sucrose is bound at residue E340. E342 (proton donor/acceptor) is an active-site residue. R360 is a binding site for sucrose.

Belongs to the glycosyl hydrolase 68 family. Monomer.

The protein localises to the secreted. The enzyme catalyses [6)-beta-D-fructofuranosyl-(2-&gt;](n) alpha-D-glucopyranoside + sucrose = [6)-beta-D-fructofuranosyl-(2-&gt;](n+1) alpha-D-glucopyranoside + D-glucose. Ca(2+) may play an important structural role and promote stability of levansucrase. The enzyme concentration is a factor defining the molecular weight (MW) levan distribution. A bimodal distribution is reported at the usual enzyme concentrations. At low concentrations, the enzyme synthesizes high MW levan, and at high concentrations, it synthesizes low MW levan. Functionally, catalyzes the synthesis of levan, a fructose polymer, by transferring the fructosyl moiety from sucrose to a growing acceptor molecule. Also displays sucrose hydrolase activity. At low sucrose concentrations, functions as an hydrolase with water as acceptor, whereas at higher substrate concentrations it adds fructosyl units to a growing levan chain. The protein is Levansucrase of Bacillus subtilis (strain 168).